A 204-amino-acid polypeptide reads, in one-letter code: Small ribosomal subunit protein uS7 (204 aa).

At methionine 1 the chain carries N-acetylmethionine. An N-acetylthreonine; in 40S ribosomal protein S5, N-terminally processed modification is found at threonine 2. Threonine 14 is modified (phosphothreonine). Lysine 47 carries the post-translational modification N6-acetyllysine; alternate. Lysine 47 is covalently cross-linked (Glycyl lysine isopeptide (Lys-Gly) (interchain with G-Cter in SUMO2); alternate). Phosphoserine is present on serine 142.

It belongs to the universal ribosomal protein uS7 family. In terms of assembly, component of the small ribosomal subunit. Part of the small subunit (SSU) processome, composed of more than 70 proteins and the RNA chaperone small nucleolar RNA (snoRNA) U3.

It localises to the cytoplasm. It is found in the nucleus. Its subcellular location is the nucleolus. Functionally, component of the small ribosomal subunit. The ribosome is a large ribonucleoprotein complex responsible for the synthesis of proteins in the cell. Part of the small subunit (SSU) processome, first precursor of the small eukaryotic ribosomal subunit. During the assembly of the SSU processome in the nucleolus, many ribosome biogenesis factors, an RNA chaperone and ribosomal proteins associate with the nascent pre-rRNA and work in concert to generate RNA folding, modifications, rearrangements and cleavage as well as targeted degradation of pre-ribosomal RNA by the RNA exosome. This chain is Small ribosomal subunit protein uS7 (Rps5), found in Rattus norvegicus (Rat).